Consider the following 311-residue polypeptide: Aspartate carbamoyltransferase catalytic subunit (311 aa).

Carbamoyl phosphate is bound by residues Arg55 and Thr56. Lys85 is a binding site for L-aspartate. The carbamoyl phosphate site is built by Arg106, His135, and Gln138. L-aspartate contacts are provided by Arg168 and Arg230. The carbamoyl phosphate site is built by Leu268 and Pro269.

It belongs to the aspartate/ornithine carbamoyltransferase superfamily. ATCase family. As to quaternary structure, heterododecamer (2C3:3R2) of six catalytic PyrB chains organized as two trimers (C3), and six regulatory PyrI chains organized as three dimers (R2).

It catalyses the reaction carbamoyl phosphate + L-aspartate = N-carbamoyl-L-aspartate + phosphate + H(+). The protein operates within pyrimidine metabolism; UMP biosynthesis via de novo pathway; (S)-dihydroorotate from bicarbonate: step 2/3. Its function is as follows. Catalyzes the condensation of carbamoyl phosphate and aspartate to form carbamoyl aspartate and inorganic phosphate, the committed step in the de novo pyrimidine nucleotide biosynthesis pathway. The sequence is that of Aspartate carbamoyltransferase catalytic subunit from Salmonella dublin (strain CT_02021853).